Consider the following 61-residue polypeptide: Small ribosomal subunit protein uS14 (61 aa).

Cys-24, Cys-27, Cys-40, and Cys-43 together coordinate Zn(2+).

It belongs to the universal ribosomal protein uS14 family. Zinc-binding uS14 subfamily. As to quaternary structure, part of the 30S ribosomal subunit. Contacts proteins S3 and S10. Zn(2+) is required as a cofactor.

Functionally, binds 16S rRNA, required for the assembly of 30S particles and may also be responsible for determining the conformation of the 16S rRNA at the A site. The sequence is that of Small ribosomal subunit protein uS14 from Mycoplasmopsis agalactiae (strain NCTC 10123 / CIP 59.7 / PG2) (Mycoplasma agalactiae).